The sequence spans 151 residues: Transcriptional regulator MraZ (151 aa).

SpoVT-AbrB domains follow at residues Ile-5–Glu-52 and Ala-81–Glu-124.

It belongs to the MraZ family. As to quaternary structure, forms oligomers.

The protein resides in the cytoplasm. Its subcellular location is the nucleoid. This is Transcriptional regulator MraZ from Marinomonas sp. (strain MWYL1).